The primary structure comprises 77 residues: Large ribosomal subunit protein bL28 (77 aa).

A disordered region spans residues 1 to 20 (MSRVCQVTGKGPVTGNNISH).

Belongs to the bacterial ribosomal protein bL28 family.

The polypeptide is Large ribosomal subunit protein bL28 (Pseudomonas fluorescens (strain Pf0-1)).